The following is a 280-amino-acid chain: Pantothenate synthetase (280 aa).

30–37 (MGYLHEGH) is a binding site for ATP. Catalysis depends on His-37, which acts as the Proton donor. Gln-61 provides a ligand contact to (R)-pantoate. Beta-alanine is bound at residue Gln-61. 147-150 (GQKD) serves as a coordination point for ATP. A (R)-pantoate-binding site is contributed by Gln-153. ATP contacts are provided by residues Val-176 and 184–187 (MSSR).

Belongs to the pantothenate synthetase family. As to quaternary structure, homodimer.

The protein localises to the cytoplasm. The enzyme catalyses (R)-pantoate + beta-alanine + ATP = (R)-pantothenate + AMP + diphosphate + H(+). Its pathway is cofactor biosynthesis; (R)-pantothenate biosynthesis; (R)-pantothenate from (R)-pantoate and beta-alanine: step 1/1. Functionally, catalyzes the condensation of pantoate with beta-alanine in an ATP-dependent reaction via a pantoyl-adenylate intermediate. The polypeptide is Pantothenate synthetase (Thermosipho melanesiensis (strain DSM 12029 / CIP 104789 / BI429)).